We begin with the raw amino-acid sequence, 477 residues long: Glycogen synthase (477 aa).

Position 15 (lysine 15) interacts with ADP-alpha-D-glucose.

Belongs to the glycosyltransferase 1 family. Bacterial/plant glycogen synthase subfamily.

It catalyses the reaction [(1-&gt;4)-alpha-D-glucosyl](n) + ADP-alpha-D-glucose = [(1-&gt;4)-alpha-D-glucosyl](n+1) + ADP + H(+). It functions in the pathway glycan biosynthesis; glycogen biosynthesis. Its function is as follows. Synthesizes alpha-1,4-glucan chains using ADP-glucose. This Salmonella arizonae (strain ATCC BAA-731 / CDC346-86 / RSK2980) protein is Glycogen synthase.